Consider the following 464-residue polypeptide: ATP synthase subunit beta (464 aa).

154-161 (GGAGVGKT) contacts ATP.

Belongs to the ATPase alpha/beta chains family. In terms of assembly, F-type ATPases have 2 components, CF(1) - the catalytic core - and CF(0) - the membrane proton channel. CF(1) has five subunits: alpha(3), beta(3), gamma(1), delta(1), epsilon(1). CF(0) has three main subunits: a(1), b(2) and c(9-12). The alpha and beta chains form an alternating ring which encloses part of the gamma chain. CF(1) is attached to CF(0) by a central stalk formed by the gamma and epsilon chains, while a peripheral stalk is formed by the delta and b chains.

It localises to the cell membrane. The catalysed reaction is ATP + H2O + 4 H(+)(in) = ADP + phosphate + 5 H(+)(out). Its function is as follows. Produces ATP from ADP in the presence of a proton gradient across the membrane. The catalytic sites are hosted primarily by the beta subunits. This chain is ATP synthase subunit beta, found in Mycoplasmopsis synoviae (strain 53) (Mycoplasma synoviae).